Here is a 292-residue protein sequence, read N- to C-terminus: Ribosomal protein L11 methyltransferase (292 aa).

Residues Thr-144, Gly-165, Asp-187, and Asn-229 each coordinate S-adenosyl-L-methionine.

Belongs to the methyltransferase superfamily. PrmA family.

It is found in the cytoplasm. It carries out the reaction L-lysyl-[protein] + 3 S-adenosyl-L-methionine = N(6),N(6),N(6)-trimethyl-L-lysyl-[protein] + 3 S-adenosyl-L-homocysteine + 3 H(+). Functionally, methylates ribosomal protein L11. This is Ribosomal protein L11 methyltransferase from Pseudomonas syringae pv. tomato (strain ATCC BAA-871 / DC3000).